Here is a 723-residue protein sequence, read N- to C-terminus: MAAPSLLNWRRVSSFTGPVPRARHGHRAVAIRELMIIFGGGNEGIADELHVYNTVTNQWFLPAVRGDIPPGCAAHGFVCDGTRILVFGGMVEYGRYSNELYELQASRWLWKKVKPQPPPSGLPPCPRLGHSFSLYGNKCYLFAGLANESEDSNNNVPRYLNDFYELELQHGSGVVGWSVPATKGTVPSPRESHTAVIYCKRDSGSPKMYVFGGMCGARLDDLWQLDLETMSWSKPETKGTVPLPRSLHTASVIGNKMYIFGGWVPHKGENTENSPHDCEWRCTSSFSYLNLDTAEWTTLVSDSQEDKKNSRPRPRAGHCAVAIGTRLYFWSGRDGYKKALNSQVCCKDLWYLDTEKPPAPSQVQLIKATTNSFHVKWDEVPTVEGYLLQLNTDLTHQAASPDASAAPNTLGGRTDPHRQGSNSILHNSVSDPANCTKPEHTAVAARGMSLKSKPDSRAADSSVALHSPLAPNTSNNNSCMADMLWKSEVDEICALPATKISRVEAHAAATPFSKETPSNPVAILKAEQWCDVGIFKNNTALVSQFYLLPKGKQSMSKVGNADVPDYSLLKKQDLVPGTVYKFRVAAINGCGIGPFSKLSEFKTCIPGFPGAPSTVRISKNVEGIHLSWEPPTSPSGNILEYSAYLAIRTAQVQDNPSQLVFMRIYCGLKTSCIVTAGQLANAHIDYTSRPAIVFRISAKNEKGYGPATQVRWLQGNSKKAPLS.

Kelch repeat units follow at residues 34 to 79 (LMII…GFVC), 83 to 130 (RILV…RLGH), 207 to 255 (KMYV…VIGN), and 257 to 305 (MYIF…DSQE). Fibronectin type-III domains follow at residues 357–436 (PPAP…ANCT), 516–606 (TPSN…TCIP), and 608–720 (FPGA…SKKA). The tract at residues 398-472 (AASPDASAAP…VALHSPLAPN (75 aa)) is disordered. Positions 419 to 433 (QGSNSILHNSVSDPA) are enriched in polar residues.

As to quaternary structure, binds KMT2A/MLL1. Component of the MLL1/MLL complex, at least composed of KMT2A/MLL1, ASH2L, RBBP5, DPY30, WDR5, MEN1, HCFC1 and HCFC2. Interacts with TASOR.

The protein resides in the cytoplasm. It is found in the nucleus. This is Host cell factor 2 (Hcfc2) from Rattus norvegicus (Rat).